The primary structure comprises 267 residues: NAD kinase (267 aa).

Residue aspartate 45 is the Proton acceptor of the active site. NAD(+)-binding positions include 45 to 46 (DG), 121 to 122 (NE), arginine 147, aspartate 149, 160 to 165 (TAYSKS), and alanine 184.

This sequence belongs to the NAD kinase family. Requires a divalent metal cation as cofactor.

It localises to the cytoplasm. It catalyses the reaction NAD(+) + ATP = ADP + NADP(+) + H(+). Involved in the regulation of the intracellular balance of NAD and NADP, and is a key enzyme in the biosynthesis of NADP. Catalyzes specifically the phosphorylation on 2'-hydroxyl of the adenosine moiety of NAD to yield NADP. This Lactobacillus acidophilus (strain ATCC 700396 / NCK56 / N2 / NCFM) protein is NAD kinase.